The following is a 315-amino-acid chain: Histone-lysine N-methyltransferase SETMAR (315 aa).

A Pre-SET domain is found at 74–137; that stretch reads PGCACIKTPC…HCRNRVVQSG (64 aa). Cys76, Cys78, Cys83, Cys88, Cys90, Cys119, Cys123, Cys125, and Cys129 together coordinate Zn(2+). Residues 140–264 form the SET domain; sequence FLLQVFQTEK…PGEELSYDYS (125 aa). Residues 150–152, Tyr193, Arg221, and 224–225 contribute to the S-adenosyl-L-methionine site; these read KGW and NH. Zn(2+) is bound by residues Cys227, Cys288, Cys290, and Cys295. The 17-residue stretch at 284–300 folds into the Post-SET domain; the sequence is PRKPCYCGAQSCATFLP.

This sequence belongs to the class V-like SAM-binding methyltransferase superfamily.

It localises to the nucleus. The protein resides in the chromosome. The enzyme catalyses L-lysyl(36)-[histone H3] + 2 S-adenosyl-L-methionine = N(6),N(6)-dimethyl-L-lysyl(36)-[histone H3] + 2 S-adenosyl-L-homocysteine + 2 H(+). Histone methyltransferase that methylates 'Lys-4' and 'Lys-36' of histone H3, 2 specific tags for epigenetic transcriptional activation. Specifically mediates dimethylation of H3 'Lys-36'. The chain is Histone-lysine N-methyltransferase SETMAR from Rattus norvegicus (Rat).